Consider the following 113-residue polypeptide: Sensorin-A (113 aa).

A signal peptide spans 1–32 (MPSRAATSPLNVQMMVVLCIVCLALQAVAANA). F54 is modified (phenylalanine amide). The propeptide occupies 58 to 113 (SSSETYSTNLINLLSRQLVSQEELRAILEKQPILLDEVVKILDRNDDGYITVADLL). The EF-hand domain occupies 87-113 (KQPILLDEVVKILDRNDDGYITVADLL). Residues D100, N102, D104, Y106, and D111 each contribute to the Ca(2+) site.

Seems to be specific to the mechanosensory neurons of the central nervous system.

The protein localises to the secreted. Its function is as follows. May function as an inhibitory cotransmitter acting in conjunction with the fast excitatory transmitter released by sensory neurons. The peptide selectively inhibits certain postsynaptic cells probably by means of sensorin A release. This Aplysia californica (California sea hare) protein is Sensorin-A (PSC1).